The sequence spans 2422 residues: Non-reducing polyketide synthase trt4 (2422 aa).

Residues V14–Q196 form an N-terminal acylcarrier protein transacylase domain (SAT) region. The segment at V289–T314 is disordered. Positions N297–P312 are enriched in polar residues. Residues T329–E745 form the Ketosynthase family 3 (KS3) domain. Active-site for beta-ketoacyl synthase activity residues include C494, H629, and H668. The tract at residues L856 to A1121 is malonyl-CoA:ACP transacylase (MAT) domain. The For acyl/malonyl transferase activity role is filled by S904. The tract at residues P1190–N1316 is N-terminal hotdog fold. One can recognise a PKS/mFAS DH domain in the interval P1190 to K1495. The product template (PT) domain stretch occupies residues S1191–L1494. The active-site Proton acceptor; for dehydratase activity is the H1221. The C-terminal hotdog fold stretch occupies residues S1345 to K1495. D1402 serves as the catalytic Proton donor; for dehydratase activity. The Carrier domain occupies S1535–G1612. The residue at position 1572 (S1572) is an O-(pantetheine 4'-phosphoryl)serine. The interval A1615–P1636 is disordered. The methyltransferase (CMeT) domain stretch occupies residues Q1774–N2007. The segment at N2036 to Y2383 is thioesterase (TE) domain. Residues S2159, D2320, and H2352 each act as for thioesterase activity in the active site.

The enzyme catalyses 3 malonyl-CoA + acetyl-CoA + 2 S-adenosyl-L-methionine = 3,5-dimethylorsellinate + 2 S-adenosyl-L-homocysteine + 3 CO2 + 4 CoA. It participates in secondary metabolite biosynthesis; terpenoid biosynthesis. Non-reducing polyketide synthase; part of the gene cluster that mediates the biosynthesis of terretonin, a fungal meroterpenoid that acts as a mycotoxin. The first step of the pathway is the synthesis of 3,5-dimethylorsellinic acid (DMOA) by the polyketide synthase trt4. DMOA is then prenylated into farnesyl-DMOA by the polyprenyl transferase trt2. Methylation by the methyltransferase trt5 then leads to farnesyl-DMOA methyl ester which is further subject to epoxidation by the FAD-dependent monooxygenase trt8 to yield epoxyfarnesyl-DMOA methyl ester. Cyclization of epoxyfarnesyl-DMOA methyl ester by the terpene cyclase trt1 leads to a tetracycle intermediate which is in turn converted to preterretonin. Dehydrogenase trt9 comes next to transform preterretonin to preterrenoid. The FAD-dependent monooxygenase trt3 is then required for the C-hydroxylation at C16 of preterrenoid to yield terrenoid. The cytochrome P450 trt6 catalyzes three successive oxidations to transform terrenoid into an unstable intermediate, which then undergoes the D-ring expansion and unusual rearrangement of the methoxy group to afford the core skeleton of terretonin. Trt14 catalyzes the D-ring expansion of terretonin involving intramolecular methoxy rearrangement as well as the hydrolysis of the expanded D-ring and the methyl ester moiety. Finally, the nonheme iron-dependent dioxygenase trt7 accomplishes the last two oxidation reactions steps to complete the biosynthesis of terretonin. Terretonin C is produced via spontaneous decarboxylation of the terretonin precursor. Another shunt product of the terretonin biosynthesis is dihydrofarnesyl-DMOA, derived from epoxyfarnesyl-DMOA through hydrolysis of the epoxide. This chain is Non-reducing polyketide synthase trt4, found in Aspergillus terreus (strain NIH 2624 / FGSC A1156).